The chain runs to 636 residues: LEAF RUST 10 DISEASE-RESISTANCE LOCUS RECEPTOR-LIKE PROTEIN KINASE-like 1.5 (636 aa).

Residues Met1–Ala26 form the signal peptide. Topologically, residues Ser27–Val257 are extracellular. Residues Asn73, Asn102, Asn146, and Asn224 are each glycosylated (N-linked (GlcNAc...) asparagine). The chain crosses the membrane as a helical span at residues Leu258–Phe278. At Arg279–Asn636 the chain is on the cytoplasmic side. One can recognise a Protein kinase domain in the interval Phe324 to Val628. Residues Ile330–Val338 and Lys352 contribute to the ATP site. Asp458 (proton acceptor) is an active-site residue.

The protein belongs to the protein kinase superfamily. Ser/Thr protein kinase family.

Its subcellular location is the cell membrane. It catalyses the reaction L-seryl-[protein] + ATP = O-phospho-L-seryl-[protein] + ADP + H(+). It carries out the reaction L-threonyl-[protein] + ATP = O-phospho-L-threonyl-[protein] + ADP + H(+). In Arabidopsis thaliana (Mouse-ear cress), this protein is LEAF RUST 10 DISEASE-RESISTANCE LOCUS RECEPTOR-LIKE PROTEIN KINASE-like 1.5.